Here is a 110-residue protein sequence, read N- to C-terminus: MSELKTVGLFAITALAEIVGCYLPYLWLREGKSIWLLVPSALSLVAFVWLLTLHPTAVGRVYAAYGGVYVTMAILWLWAVDGIRPTTWDILGTSVALLGMAIIMFAPRNT.

The next 4 helical transmembrane spans lie at Val7 to Trp27, Ser33 to Leu53, Ala63 to Ile83, and Thr87 to Pro107.

Belongs to the UPF0060 family.

It is found in the cell inner membrane. This Psychrobacter cryohalolentis (strain ATCC BAA-1226 / DSM 17306 / VKM B-2378 / K5) protein is UPF0060 membrane protein Pcryo_1341.